Consider the following 202-residue polypeptide: Small ribosomal subunit protein uS4 (202 aa).

Basic residues predominate over residues 1 to 13 (MSRYRGPRLRVTR). The disordered stretch occupies residues 1-42 (MSRYRGPRLRVTRRLGELPGLTRKASKKSNPPGQHGQARRKR). One can recognise an S4 RNA-binding domain in the interval 90–152 (NRLDNVCFRL…KASKKLVEGN (63 aa)).

Belongs to the universal ribosomal protein uS4 family. As to quaternary structure, part of the 30S ribosomal subunit. Contacts protein S5. The interaction surface between S4 and S5 is involved in control of translational fidelity.

One of the primary rRNA binding proteins, it binds directly to 16S rRNA where it nucleates assembly of the body of the 30S subunit. Its function is as follows. With S5 and S12 plays an important role in translational accuracy. The polypeptide is Small ribosomal subunit protein uS4 (Prochlorococcus marinus subsp. pastoris (strain CCMP1986 / NIES-2087 / MED4)).